A 282-amino-acid polypeptide reads, in one-letter code: Undecaprenyl-diphosphatase (282 aa).

A run of 7 helical transmembrane segments spans residues 6–26 (LYFVKAFFLGIIEGLTEFIPV), 45–65 (SGKVFEVVIQLGAILAVMWIF), 85–105 (LFTRNLLLAFFPAAIIGAIFI), 112–132 (FYHPGVVAVTLVLGGLIMLWV), 200–220 (ATEFSFFLAMPTMLGAAVYDM), 230–250 (HDLGAIAVGFVAAFLSALLVV), and 262–282 (YRGFAWYRIALGVVVAAWLAF).

The protein belongs to the UppP family.

The protein localises to the cell inner membrane. The catalysed reaction is di-trans,octa-cis-undecaprenyl diphosphate + H2O = di-trans,octa-cis-undecaprenyl phosphate + phosphate + H(+). Its function is as follows. Catalyzes the dephosphorylation of undecaprenyl diphosphate (UPP). Confers resistance to bacitracin. The chain is Undecaprenyl-diphosphatase from Bordetella avium (strain 197N).